The primary structure comprises 420 residues: NEDD8-specific protease 1 (420 aa).

A compositionally biased stretch (low complexity) spans Lys-257–Ser-281. Residues Lys-257–Phe-420 form a disordered region. A compositionally biased stretch (basic and acidic residues) spans Asn-286–His-296. Basic residues predominate over residues Glu-297 to His-310. Over residues Ser-311–Gln-324 the composition is skewed to basic and acidic residues. Residues Ser-329, Ser-340, and Ser-351 each carry the phosphoserine modification. Basic and acidic residues predominate over residues Asn-355 to Glu-377.

It belongs to the peptidase C48 family. As to quaternary structure, interacts with csn1. It is, however, not a component of the signalosome.

The protein resides in the cytoplasm. Protease that catalyzes two essential functions in the NEDD8 pathway: processing of full-length NEDD8 to its mature form and deconjugation of NEDD8 from targeted proteins such as the pcu1, pcu2 and pcu4 cullins and other proteins. The chain is NEDD8-specific protease 1 (nep1) from Schizosaccharomyces pombe (strain 972 / ATCC 24843) (Fission yeast).